A 144-amino-acid chain; its full sequence is Large ribosomal subunit protein uL16 (144 aa).

Positions 1 to 16 (MLTPKRVKHRKQHRGK) are enriched in basic residues. The tract at residues 1–22 (MLTPKRVKHRKQHRGKMAGNAK) is disordered.

It belongs to the universal ribosomal protein uL16 family. In terms of assembly, part of the 50S ribosomal subunit.

Its function is as follows. Binds 23S rRNA and is also seen to make contacts with the A and possibly P site tRNAs. This is Large ribosomal subunit protein uL16 from Brevibacillus brevis (strain 47 / JCM 6285 / NBRC 100599).